The chain runs to 162 residues: Transcription elongation factor GreA (162 aa).

Residues 45 to 74 adopt a coiled-coil conformation; sequence ENAEYEAAREKQAFIEGRIKELEDMTARAE.

It belongs to the GreA/GreB family.

In terms of biological role, necessary for efficient RNA polymerase transcription elongation past template-encoded arresting sites. The arresting sites in DNA have the property of trapping a certain fraction of elongating RNA polymerases that pass through, resulting in locked ternary complexes. Cleavage of the nascent transcript by cleavage factors such as GreA or GreB allows the resumption of elongation from the new 3'terminus. GreA releases sequences of 2 to 3 nucleotides. The protein is Transcription elongation factor GreA of Rickettsia conorii (strain ATCC VR-613 / Malish 7).